Consider the following 101-residue polypeptide: Small ribosomal subunit protein uS14 (101 aa).

The protein belongs to the universal ribosomal protein uS14 family. As to quaternary structure, part of the 30S ribosomal subunit. Contacts proteins S3 and S10.

Binds 16S rRNA, required for the assembly of 30S particles and may also be responsible for determining the conformation of the 16S rRNA at the A site. In Shewanella loihica (strain ATCC BAA-1088 / PV-4), this protein is Small ribosomal subunit protein uS14.